The following is a 545-amino-acid chain: Alpha-galactosidase A (545 aa).

The first 31 residues, 1 to 31 (MIQGLESIMNQGTKRILLAATLAATPWQVYG), serve as a signal peptide directing secretion. The cysteines at positions 54 and 86 are disulfide-linked. N-linked (GlcNAc...) asparagine glycans are attached at residues N57, N95, N101, and N131. A disulfide bridge connects residues C134 and C164. D162 functions as the Nucleophile in the catalytic mechanism. N-linked (GlcNAc...) asparagine glycosylation occurs at N211. D220 acts as the Proton donor in catalysis. 2 N-linked (GlcNAc...) asparagine glycosylation sites follow: N363 and N444. In terms of domain architecture, Ricin B-type lectin spans 421–518 (CSSVVPTGLV…KNAKTDGCLT (98 aa)). 2 disulfides stabilise this stretch: C438–C452 and C477–C490.

It belongs to the glycosyl hydrolase 27 family. In terms of processing, a C-terminal Ser/Thr-rich region may provide possible sites for O-glycosylation.

It is found in the secreted. It carries out the reaction Hydrolysis of terminal, non-reducing alpha-D-galactose residues in alpha-D-galactosides, including galactose oligosaccharides, galactomannans and galactolipids.. Hydrolyzes a variety of simple alpha-D-galactoside as well as more complex molecules such as oligosaccharides and polysaccharides. In Aspergillus niger, this protein is Alpha-galactosidase A (aglA).